Reading from the N-terminus, the 336-residue chain is Fructose-1,6-bisphosphatase class 1 (336 aa).

Residues E92, D115, L117, and D118 each contribute to the Mg(2+) site. Residues 118 to 121 (DGSS), N211, Y244, 262 to 264 (YLY), and K274 contribute to the substrate site. E280 provides a ligand contact to Mg(2+).

Belongs to the FBPase class 1 family. In terms of assembly, homotetramer. Mg(2+) is required as a cofactor.

It localises to the cytoplasm. It catalyses the reaction beta-D-fructose 1,6-bisphosphate + H2O = beta-D-fructose 6-phosphate + phosphate. It participates in carbohydrate biosynthesis; gluconeogenesis. The sequence is that of Fructose-1,6-bisphosphatase class 1 from Aliivibrio fischeri (strain MJ11) (Vibrio fischeri).